The chain runs to 296 residues: ATP synthase peripheral stalk subunit OSCP, mitochondrial (296 aa).

This sequence belongs to the ATPase delta chain family. Component of the ATP synthase complex composed at least of ATP5F1A/subunit alpha, ATP5F1B/subunit beta, ATP5MC1/subunit c (homooctomer), MT-ATP6/subunit a, MT-ATP8/subunit 8, ATP5ME/subunit e, ATP5MF/subunit f, ATP5MG/subunit g, ATP5MK/subunit k, ATP5MJ/subunit j, ATP5F1C/subunit gamma, ATP5F1D/subunit delta, ATP5F1E/subunit epsilon, ATP5PF/subunit F6, ATP5PB/subunit b, ATP5PD/subunit d, ATP5PO/subunit OSCP. ATP synthase complex consists of a soluble F(1) head domain (subunits alpha(3) and beta(3)) - the catalytic core - and a membrane F(0) domain - the membrane proton channel (subunits c, a, 8, e, f, g, k and j). These two domains are linked by a central stalk (subunits gamma, delta, and epsilon) rotating inside the F1 region and a stationary peripheral stalk (subunits F6, b, d, and OSCP).

Its subcellular location is the mitochondrion. The protein resides in the mitochondrion inner membrane. Its function is as follows. Subunit OSCP, of the mitochondrial membrane ATP synthase complex (F(1)F(0) ATP synthase or Complex V) that produces ATP from ADP in the presence of a proton gradient across the membrane which is generated by electron transport complexes of the respiratory chain. ATP synthase complex consist of a soluble F(1) head domain - the catalytic core - and a membrane F(1) domain - the membrane proton channel. These two domains are linked by a central stalk rotating inside the F(1) region and a stationary peripheral stalk. During catalysis, ATP synthesis in the catalytic domain of F(1) is coupled via a rotary mechanism of the central stalk subunits to proton translocation. In vivo, can only synthesize ATP although its ATP hydrolase activity can be activated artificially in vitro. Part of the complex F(0) domain. Part of the complex F(0) domain and the peripheric stalk, which acts as a stator to hold the catalytic alpha(3)beta(3) subcomplex and subunit a/ATP6 static relative to the rotary elements. The chain is ATP synthase peripheral stalk subunit OSCP, mitochondrial from Dictyostelium discoideum (Social amoeba).